A 546-amino-acid polypeptide reads, in one-letter code: Chaperonin GroEL (546 aa).

ATP contacts are provided by residues 29–32 (TMGP), lysine 50, 86–90 (DGTTT), glycine 414, and aspartate 492.

It belongs to the chaperonin (HSP60) family. As to quaternary structure, forms a cylinder of 14 subunits composed of two heptameric rings stacked back-to-back. Interacts with the co-chaperonin GroES.

It is found in the cytoplasm. It catalyses the reaction ATP + H2O + a folded polypeptide = ADP + phosphate + an unfolded polypeptide.. Functionally, together with its co-chaperonin GroES, plays an essential role in assisting protein folding. The GroEL-GroES system forms a nano-cage that allows encapsulation of the non-native substrate proteins and provides a physical environment optimized to promote and accelerate protein folding. This is Chaperonin GroEL from Helicobacter acinonychis (strain Sheeba).